A 650-amino-acid chain; its full sequence is Fructose-1,6-bisphosphatase class 3 (650 aa).

The protein belongs to the FBPase class 3 family. Mn(2+) is required as a cofactor.

The enzyme catalyses beta-D-fructose 1,6-bisphosphate + H2O = beta-D-fructose 6-phosphate + phosphate. It functions in the pathway carbohydrate biosynthesis; gluconeogenesis. This chain is Fructose-1,6-bisphosphatase class 3, found in Staphylococcus saprophyticus subsp. saprophyticus (strain ATCC 15305 / DSM 20229 / NCIMB 8711 / NCTC 7292 / S-41).